The primary structure comprises 405 residues: Probable tRNA sulfurtransferase (405 aa).

One can recognise a THUMP domain in the interval 60-165 (EPVNDRLKVV…QDGAYISNQL (106 aa)). ATP is bound by residues 183-184 (ML), 208-209 (HF), Arg-265, Gly-287, and Gln-296.

This sequence belongs to the ThiI family.

Its subcellular location is the cytoplasm. It catalyses the reaction [ThiI sulfur-carrier protein]-S-sulfanyl-L-cysteine + a uridine in tRNA + 2 reduced [2Fe-2S]-[ferredoxin] + ATP + H(+) = [ThiI sulfur-carrier protein]-L-cysteine + a 4-thiouridine in tRNA + 2 oxidized [2Fe-2S]-[ferredoxin] + AMP + diphosphate. It carries out the reaction [ThiS sulfur-carrier protein]-C-terminal Gly-Gly-AMP + S-sulfanyl-L-cysteinyl-[cysteine desulfurase] + AH2 = [ThiS sulfur-carrier protein]-C-terminal-Gly-aminoethanethioate + L-cysteinyl-[cysteine desulfurase] + A + AMP + 2 H(+). It functions in the pathway cofactor biosynthesis; thiamine diphosphate biosynthesis. Its function is as follows. Catalyzes the ATP-dependent transfer of a sulfur to tRNA to produce 4-thiouridine in position 8 of tRNAs, which functions as a near-UV photosensor. Also catalyzes the transfer of sulfur to the sulfur carrier protein ThiS, forming ThiS-thiocarboxylate. This is a step in the synthesis of thiazole, in the thiamine biosynthesis pathway. The sulfur is donated as persulfide by IscS. This chain is Probable tRNA sulfurtransferase, found in Lactobacillus delbrueckii subsp. bulgaricus (strain ATCC BAA-365 / Lb-18).